The sequence spans 498 residues: ATP synthase subunit beta, chloroplastic (498 aa).

A Phosphothreonine modification is found at threonine 6. Residue serine 13 is modified to Phosphoserine. An ATP-binding site is contributed by 172 to 179 (GGAGVGKT).

This sequence belongs to the ATPase alpha/beta chains family. In terms of assembly, F-type ATPases have 2 components, CF(1) - the catalytic core - and CF(0) - the membrane proton channel. CF(1) has five subunits: alpha(3), beta(3), gamma(1), delta(1), epsilon(1). CF(0) has four main subunits: a(1), b(1), b'(1) and c(9-12).

The protein resides in the plastid. It is found in the chloroplast thylakoid membrane. The enzyme catalyses ATP + H2O + 4 H(+)(in) = ADP + phosphate + 5 H(+)(out). Produces ATP from ADP in the presence of a proton gradient across the membrane. The catalytic sites are hosted primarily by the beta subunits. This Brassica napus (Rape) protein is ATP synthase subunit beta, chloroplastic.